A 205-amino-acid polypeptide reads, in one-letter code: Guanylate kinase (205 aa).

In terms of domain architecture, Guanylate kinase-like spans 19 to 197 (PKLFTISAPA…AYRVLKSIFI (179 aa)). 26–33 (APAGVGKT) is a binding site for ATP.

Belongs to the guanylate kinase family.

The protein localises to the cytoplasm. It carries out the reaction GMP + ATP = GDP + ADP. Essential for recycling GMP and indirectly, cGMP. The polypeptide is Guanylate kinase (gmk) (Chlamydia pneumoniae (Chlamydophila pneumoniae)).